The following is a 415-amino-acid chain: Mitochondrial distribution and morphology protein 12 (415 aa).

Residues 1–402 (MSFDINWSEL…WPSWVCFDLN (402 aa)) form the SMP-LTD domain. The tract at residues 53-146 (EITIRHIGDP…PPLTDLRRSR (94 aa)) is disordered. Acidic residues-rich tracts occupy residues 62-75 (PFDD…DDDE) and 92-103 (NSSDDDEDDEYD).

Belongs to the MDM12 family. As to quaternary structure, component of the ER-mitochondria encounter structure (ERMES) or MDM complex, composed of MMM1, MDM10, MDM12 and MDM34. An MMM1 homodimer associates with one molecule of MDM12 on each side in a pairwise head-to-tail manner, and the SMP-LTD domains of MMM1 and MDM12 generate a continuous hydrophobic tunnel for phospholipid trafficking.

It localises to the mitochondrion outer membrane. Its subcellular location is the endoplasmic reticulum membrane. Component of the ERMES/MDM complex, which serves as a molecular tether to connect the endoplasmic reticulum (ER) and mitochondria. Components of this complex are involved in the control of mitochondrial shape and protein biogenesis, and function in nonvesicular lipid trafficking between the ER and mitochondria. MDM12 is required for the interaction of the ER-resident membrane protein MMM1 and the outer mitochondrial membrane-resident beta-barrel protein MDM10. The MDM12-MMM1 subcomplex functions in the major beta-barrel assembly pathway that is responsible for biogenesis of all mitochondrial outer membrane beta-barrel proteins, and acts in a late step after the SAM complex. The MDM10-MDM12-MMM1 subcomplex further acts in the TOM40-specific pathway after the action of the MDM12-MMM1 complex. Essential for establishing and maintaining the structure of mitochondria and maintenance of mtDNA nucleoids. This chain is Mitochondrial distribution and morphology protein 12, found in Debaryomyces hansenii (strain ATCC 36239 / CBS 767 / BCRC 21394 / JCM 1990 / NBRC 0083 / IGC 2968) (Yeast).